Here is a 260-residue protein sequence, read N- to C-terminus: Trialysin (260 aa).

Positions 1–19 (MSKFWLLLLLVAAFQFAHS) are cleaved as a signal peptide. Positions 20–55 (YPAAEYELDETTNDEVRQFIGDGYFEDEGDDGDEER) are cleaved as a propeptide — removed in mature form, probably by the serine protease triapsin.

This sequence belongs to the redulysin-like family. As to expression, expressed in salivary glands.

The protein resides in the secreted. It localises to the target cell membrane. Its function is as follows. Pore-forming protein that induces lysis of T.cruzi trypomastigotes, bacteria E.coli and human red blood cells. The parasite lysis is much more important than the hemolysis, probably due to difference in membrane composition. Its action on protozoan parasites and bacteria may indicate a role in the control of microorganism growth in the salivary glands. This is Trialysin from Triatoma infestans (Assassin bug).